Consider the following 59-residue polypeptide: Protein translocase subunit SecE (59 aa).

A helical membrane pass occupies residues 30-50; the sequence is ITVISTVIFFVIFFALLDTGI.

The protein belongs to the SecE/SEC61-gamma family. In terms of assembly, component of the Sec protein translocase complex. Heterotrimer consisting of SecY, SecE and SecG subunits. The heterotrimers can form oligomers, although 1 heterotrimer is thought to be able to translocate proteins. Interacts with the ribosome. Interacts with SecDF, and other proteins may be involved. Interacts with SecA.

The protein resides in the cell membrane. Essential subunit of the Sec protein translocation channel SecYEG. Clamps together the 2 halves of SecY. May contact the channel plug during translocation. This Bacillus subtilis (strain 168) protein is Protein translocase subunit SecE.